We begin with the raw amino-acid sequence, 236 residues long: Biosynthetic peptidoglycan transglycosylase (236 aa).

Residues 17 to 37 form a helical membrane-spanning segment; sequence IVILVALALLALPYLLTILYG.

Belongs to the glycosyltransferase 51 family.

The protein localises to the cell inner membrane. The catalysed reaction is [GlcNAc-(1-&gt;4)-Mur2Ac(oyl-L-Ala-gamma-D-Glu-L-Lys-D-Ala-D-Ala)](n)-di-trans,octa-cis-undecaprenyl diphosphate + beta-D-GlcNAc-(1-&gt;4)-Mur2Ac(oyl-L-Ala-gamma-D-Glu-L-Lys-D-Ala-D-Ala)-di-trans,octa-cis-undecaprenyl diphosphate = [GlcNAc-(1-&gt;4)-Mur2Ac(oyl-L-Ala-gamma-D-Glu-L-Lys-D-Ala-D-Ala)](n+1)-di-trans,octa-cis-undecaprenyl diphosphate + di-trans,octa-cis-undecaprenyl diphosphate + H(+). It functions in the pathway cell wall biogenesis; peptidoglycan biosynthesis. Peptidoglycan polymerase that catalyzes glycan chain elongation from lipid-linked precursors. In Rhodopseudomonas palustris (strain ATCC BAA-98 / CGA009), this protein is Biosynthetic peptidoglycan transglycosylase.